The sequence spans 195 residues: Granulocyte colony-stimulating factor (195 aa).

Positions methionine 1–alanine 21 are cleaved as a signal peptide. 2 disulfide bridges follow: cysteine 57–cysteine 63 and cysteine 85–cysteine 95. Threonine 154 carries O-linked (GalNAc...) threonine glycosylation.

It belongs to the IL-6 superfamily. Monomer. Post-translationally, O-glycosylated.

It is found in the secreted. In terms of biological role, granulocyte/macrophage colony-stimulating factors are cytokines that act in hematopoiesis by controlling the production, differentiation, and function of 2 related white cell populations of the blood, the granulocytes and the monocytes-macrophages. This CSF induces granulocytes. This Sus scrofa (Pig) protein is Granulocyte colony-stimulating factor (CSF3).